Reading from the N-terminus, the 264-residue chain is Thymidylate synthase (264 aa).

Arg21 is a dUMP binding site. (6R)-5,10-methylene-5,6,7,8-tetrahydrofolate is bound at residue His51. 126 to 127 (RR) contacts dUMP. Cys146 acts as the Nucleophile in catalysis. Residues 166 to 169 (RSAD), Asn177, and 207 to 209 (HLY) contribute to the dUMP site. (6R)-5,10-methylene-5,6,7,8-tetrahydrofolate is bound at residue Asp169. A (6R)-5,10-methylene-5,6,7,8-tetrahydrofolate-binding site is contributed by Ser263.

Belongs to the thymidylate synthase family. Bacterial-type ThyA subfamily. As to quaternary structure, homodimer.

It localises to the cytoplasm. It catalyses the reaction dUMP + (6R)-5,10-methylene-5,6,7,8-tetrahydrofolate = 7,8-dihydrofolate + dTMP. The protein operates within pyrimidine metabolism; dTTP biosynthesis. Catalyzes the reductive methylation of 2'-deoxyuridine-5'-monophosphate (dUMP) to 2'-deoxythymidine-5'-monophosphate (dTMP) while utilizing 5,10-methylenetetrahydrofolate (mTHF) as the methyl donor and reductant in the reaction, yielding dihydrofolate (DHF) as a by-product. This enzymatic reaction provides an intracellular de novo source of dTMP, an essential precursor for DNA biosynthesis. This is Thymidylate synthase from Neisseria gonorrhoeae (strain ATCC 700825 / FA 1090).